We begin with the raw amino-acid sequence, 122 residues long: Large ribosomal subunit protein uL14c (122 aa).

Belongs to the universal ribosomal protein uL14 family. In terms of assembly, part of the 50S ribosomal subunit.

The protein resides in the plastid. It is found in the chloroplast. Its function is as follows. Binds to 23S rRNA. In Oenothera biennis (German evening primrose), this protein is Large ribosomal subunit protein uL14c.